The sequence spans 160 residues: Large ribosomal subunit protein uL16 (160 aa).

The interval 138–160 (KNLENSSQENTKDSKKSQEEVKQ) is disordered. Basic and acidic residues predominate over residues 147 to 160 (NTKDSKKSQEEVKQ).

This sequence belongs to the universal ribosomal protein uL16 family. As to quaternary structure, part of the 50S ribosomal subunit.

Its function is as follows. Binds 23S rRNA and is also seen to make contacts with the A and possibly P site tRNAs. The sequence is that of Large ribosomal subunit protein uL16 from Prochlorococcus marinus (strain AS9601).